The following is a 66-amino-acid chain: U1-theraphotoxin-Cg1d 2 (66 aa).

Positions 1–21 (MKMSALFPIFGLPLLFCNSFA) are cleaved as a signal peptide. A propeptide spanning residues 22–29 (AELKATGR) is cleaved from the precursor. 3 disulfide bridges follow: cysteine 31/cysteine 46, cysteine 38/cysteine 51, and cysteine 45/cysteine 58. At proline 63 the chain carries Proline amide.

This sequence belongs to the neurotoxin 10 (Hwtx-1) family. 46 (Jztx-7/10/12) subfamily. In terms of tissue distribution, expressed by the venom gland.

The protein localises to the secreted. In terms of biological role, probable ion channel inhibitor. This chain is U1-theraphotoxin-Cg1d 2, found in Chilobrachys guangxiensis (Chinese earth tiger tarantula).